The primary structure comprises 451 residues: Enolase (451 aa).

Glutamine 167 contacts (2R)-2-phosphoglycerate. Residue glutamate 209 is the Proton donor of the active site. Mg(2+)-binding residues include aspartate 250, glutamate 307, and aspartate 334. Positions 359, 388, 389, and 410 each coordinate (2R)-2-phosphoglycerate. Lysine 359 functions as the Proton acceptor in the catalytic mechanism.

The protein belongs to the enolase family. Mg(2+) serves as cofactor.

It localises to the cytoplasm. Its subcellular location is the secreted. It is found in the cell surface. It catalyses the reaction (2R)-2-phosphoglycerate = phosphoenolpyruvate + H2O. Its pathway is carbohydrate degradation; glycolysis; pyruvate from D-glyceraldehyde 3-phosphate: step 4/5. In terms of biological role, catalyzes the reversible conversion of 2-phosphoglycerate (2-PG) into phosphoenolpyruvate (PEP). It is essential for the degradation of carbohydrates via glycolysis. This is Enolase from Mesomycoplasma hyopneumoniae (strain J / ATCC 25934 / NCTC 10110) (Mycoplasma hyopneumoniae).